A 121-amino-acid polypeptide reads, in one-letter code: MEKSYVKFETPEDVSQKALDLVESSYRTGKVKKGTNEVIKSIERGESKLVVIAEDVNPPEVVYYLPSLCEDKKVPYVYVKKKADLGSKVGIASAASVSIVDYGKNEELYKSIVSALEQIKK.

It belongs to the eukaryotic ribosomal protein eL8 family. As to quaternary structure, part of the 50S ribosomal subunit. Probably part of the RNase P complex.

It localises to the cytoplasm. Its function is as follows. Multifunctional RNA-binding protein that recognizes the K-turn motif in ribosomal RNA, the RNA component of RNase P, box H/ACA, box C/D and box C'/D' sRNAs. The sequence is that of Large ribosomal subunit protein eL8 from Thermoplasma acidophilum (strain ATCC 25905 / DSM 1728 / JCM 9062 / NBRC 15155 / AMRC-C165).